Here is a 229-residue protein sequence, read N- to C-terminus: Putative N-acetylmannosamine-6-phosphate 2-epimerase (229 aa).

The protein belongs to the NanE family.

It catalyses the reaction an N-acyl-D-glucosamine 6-phosphate = an N-acyl-D-mannosamine 6-phosphate. It participates in amino-sugar metabolism; N-acetylneuraminate degradation; D-fructose 6-phosphate from N-acetylneuraminate: step 3/5. In terms of biological role, converts N-acetylmannosamine-6-phosphate (ManNAc-6-P) to N-acetylglucosamine-6-phosphate (GlcNAc-6-P). The polypeptide is Putative N-acetylmannosamine-6-phosphate 2-epimerase (Shigella flexneri serotype 5b (strain 8401)).